The sequence spans 374 residues: MKIRLHTLLAVLTAAPLLLAAAGCGSKPPSGSPETGAGAGTVATTPASSPVTLAETGSTLLYPLFNLWGPAFHERYPNVTITAQGTGSGAGIAQAAAGTVNIGASDAYLSEGDMAAHKGLMNIALAISAQQVNYNLPGVSEHLKLNGKVLAAMYQGTIKTWDDPQIAALNPGVNLPGTAVVPLHRSDGSGDTFLFTQYLSKQDPEGWGKSPGFGTTVDFPAVPGALGENGNGGMVTGCAETPGCVAYIGISFLDQASQRGLGEAQLGNSSGNFLLPDAQSIQAAAAGFASKTPANQAISMIDGPAPDGYPIINYEYAIVNNRQKDAATAQTLQAFLHWAITDGNKASFLDQAHFQPLPPAVVKLSDALIATISS.

Positions 1-23 are cleaved as a signal peptide; it reads MKIRLHTLLAVLTAAPLLLAAAG. Cys-24 carries N-palmitoyl cysteine lipidation. Cys-24 carries S-diacylglycerol cysteine lipidation. The interval 25-48 is disordered; the sequence is GSKPPSGSPETGAGAGTVATTPAS. Phosphate is bound by residues 58–60, Ser-88, Asp-106, and 189–191; these read STL and SGD.

Belongs to the PstS family. As to quaternary structure, the complex is composed of two ATP-binding proteins (PstB), two transmembrane proteins (PstC and PstA) and a solute-binding protein (PstS).

It localises to the cell membrane. The protein resides in the secreted. Its function is as follows. Functions in inorganic phosphate uptake, a phosphate-binding protein, although probably not the main uptake protein under phosphate starvation. Part of the ABC transporter complex PstSACB involved in phosphate import. In terms of biological role, a host TLR2 agonist (toll-like receptor), requires both host TLR1 and TLR2 as coreceptors. The polypeptide is Phosphate-binding protein PstS1 (pstS1) (Mycobacterium bovis (strain BCG / Pasteur 1173P2)).